Here is a 949-residue protein sequence, read N- to C-terminus: Phosphocholine transferase AnkX (949 aa).

Positions 155 to 289 (LNPEQIPDLA…IFNTVEIIEQ (135 aa)) constitute a Fido domain. ANK repeat units lie at residues 391 to 420 (VGKT…DLSL), 424 to 453 (DGKT…SQED), 464 to 494 (HGKT…QINE), 498 to 527 (SGSS…DISD), 554 to 583 (LNKE…DIDI), 588 to 617 (DKAT…NTRL), 658 to 687 (NGNP…RVDF), 691 to 720 (LGNN…TLLH), 725 to 767 (ERRN…DLNK), and 771 to 800 (KGKT…HTNI).

Its subcellular location is the secreted. It is found in the host cytoplasm. It catalyses the reaction [Rab1 protein]-L-serine + CDP-choline = [Rab1 protein]-O-phosphocholine-L-serine + CMP + H(+). Virulence effector that plays a role in hijacking the host vesicular trafficking by recruiting the small guanosine triphosphatase (GTPase) Rab1 to the cytosolic face of the Legionella-containing vacuole (LCVs). Acts as a phosphocholine transferase by mediating the addition of phosphocholine to Ser residues of host RAB1 (RAB1A, RAB1B or RAB1C) and RAB35, leading to displacement of GDP dissociation inhibitors (GDI). Phosphocholination of target proteins also impairs accessibility to GTPase effector LepB. Can act on both GDP-bound and GTP-bound Rab proteins. This chain is Phosphocholine transferase AnkX (ankX), found in Legionella pneumophila subsp. pneumophila (strain Philadelphia 1 / ATCC 33152 / DSM 7513).